The following is a 299-amino-acid chain: Small ribosomal subunit biogenesis GTPase RsgA (299 aa).

The 162-residue stretch at 64–225 folds into the CP-type G domain; the sequence is KNEMIRPPVA…VGDTPGFSSL (162 aa). GTP contacts are provided by residues 113-116 and 168-176; these read TKTD and GQTGAGKST. Residues Cys249, Cys254, His256, and Cys262 each contribute to the Zn(2+) site.

It belongs to the TRAFAC class YlqF/YawG GTPase family. RsgA subfamily. As to quaternary structure, monomer. Associates with 30S ribosomal subunit, binds 16S rRNA. It depends on Zn(2+) as a cofactor.

It localises to the cytoplasm. One of several proteins that assist in the late maturation steps of the functional core of the 30S ribosomal subunit. Helps release RbfA from mature subunits. May play a role in the assembly of ribosomal proteins into the subunit. Circularly permuted GTPase that catalyzes slow GTP hydrolysis, GTPase activity is stimulated by the 30S ribosomal subunit. This Latilactobacillus sakei subsp. sakei (strain 23K) (Lactobacillus sakei subsp. sakei) protein is Small ribosomal subunit biogenesis GTPase RsgA.